A 179-amino-acid polypeptide reads, in one-letter code: Large ribosomal subunit protein uL5 (179 aa).

It belongs to the universal ribosomal protein uL5 family. In terms of assembly, part of the 50S ribosomal subunit; part of the 5S rRNA/L5/L18/L25 subcomplex. Contacts the 5S rRNA and the P site tRNA. Forms a bridge to the 30S subunit in the 70S ribosome.

This is one of the proteins that bind and probably mediate the attachment of the 5S RNA into the large ribosomal subunit, where it forms part of the central protuberance. In the 70S ribosome it contacts protein S13 of the 30S subunit (bridge B1b), connecting the 2 subunits; this bridge is implicated in subunit movement. Contacts the P site tRNA; the 5S rRNA and some of its associated proteins might help stabilize positioning of ribosome-bound tRNAs. This Desulfovibrio desulfuricans (strain ATCC 27774 / DSM 6949 / MB) protein is Large ribosomal subunit protein uL5.